We begin with the raw amino-acid sequence, 275 residues long: DNA polymerase II subunit B4 (275 aa).

Residues leucine 11–arginine 17 mediate DNA binding. A compositionally biased stretch (low complexity) spans alanine 112 to lysine 122. Positions alanine 112–glutamate 275 are disordered. The short motif at lysine 135–proline 142 is the Nuclear localization signal element. A compositionally biased stretch (basic and acidic residues) spans serine 151 to aspartate 161. The stretch at lysine 152–aspartate 179 forms a coiled coil. Acidic residues-rich tracts occupy residues glutamate 162–glycine 237 and glutamate 266–glutamate 275.

The protein belongs to the NFYB/HAP3 subunit family. Heterotrimeric transcription factor composed of three components, NF-YA, NF-YB and NF-YC. NF-YB and NF-YC must interact and dimerize for NF-YA association and DNA binding. Binds directly with DPB3-1.

Its subcellular location is the nucleus. In terms of biological role, component of the NF-Y/HAP transcription factor complex. The NF-Y complex stimulates the transcription of various genes by recognizing and binding to a CCAAT motif in promoters. The protein is DNA polymerase II subunit B4 of Arabidopsis thaliana (Mouse-ear cress).